We begin with the raw amino-acid sequence, 516 residues long: Glycosyltransferase-like protein gnt15 (516 aa).

Topologically, residues 1-24 (MSNFYNNNPRRNTFRLTERIKKKP) are cytoplasmic. A helical; Signal-anchor for type II membrane protein transmembrane segment spans residues 25–45 (YQTLIVFILIFLFLYVFGPFG). At 46–516 (EKKSNNNNNN…NDNCLTREHW (471 aa)) the chain is on the extracellular side. Residue asparagine 152 is glycosylated (N-linked (GlcNAc...) asparagine). A disordered region spans residues 199–250 (DTSNNNNNNNNNNNNNNNNNNNNNNNNNNNNNNNENNDNDNGNNNNNNDNEK). A compositionally biased stretch (low complexity) spans 202 to 246 (NNNNNNNNNNNNNNNNNNNNNNNNNNNNNNNENNDNDNGNNNNNN). N-linked (GlcNAc...) asparagine glycans are attached at residues asparagine 386 and asparagine 412.

This sequence belongs to the glycosyltransferase 8 family. Highly divergent.

Its subcellular location is the membrane. Functionally, may have a role in modulating cell adhesion and glycosylation. Essential for development. This is Glycosyltransferase-like protein gnt15 (gnt15) from Dictyostelium discoideum (Social amoeba).